Here is a 215-residue protein sequence, read N- to C-terminus: Beta-crystallin A3-1 (215 aa).

Positions 1–30 (MEIPVDQTEREDITSEKMAQINPLPVHLGP) are N-terminal arm. Beta/gamma crystallin 'Greek key' domains follow at residues 31 to 70 (WKITVYDQENFQGKRMEFTSSCANIMECGFDNIRSLKVEC) and 71 to 117 (GAWI…RPIC). The connecting peptide stretch occupies residues 118-123 (SANHIE). Beta/gamma crystallin 'Greek key' domains are found at residues 124–165 (SKLV…KVQC) and 166–214 (GAWV…RRIQ).

This sequence belongs to the beta/gamma-crystallin family. Homo/heterodimer, or complexes of higher-order. The structure of beta-crystallin oligomers seems to be stabilized through interactions between the N-terminal arms. The N-terminus is blocked.

Its function is as follows. Crystallins are the dominant structural components of the vertebrate eye lens. In Aquarana catesbeiana (American bullfrog), this protein is Beta-crystallin A3-1.